Reading from the N-terminus, the 86-residue chain is Small ribosomal subunit protein bS18 (86 aa).

This sequence belongs to the bacterial ribosomal protein bS18 family. Part of the 30S ribosomal subunit. Forms a tight heterodimer with protein bS6.

Binds as a heterodimer with protein bS6 to the central domain of the 16S rRNA, where it helps stabilize the platform of the 30S subunit. The chain is Small ribosomal subunit protein bS18 from Campylobacter jejuni subsp. jejuni serotype O:6 (strain 81116 / NCTC 11828).